Here is a 365-residue protein sequence, read N- to C-terminus: Eukaryotic translation initiation factor 3 subunit H (365 aa).

The MPN domain occupies 15–166 (ILLDSLVVMK…LRAWRLSTAA (152 aa)).

The protein belongs to the eIF-3 subunit H family. As to quaternary structure, component of the eukaryotic translation initiation factor 3 (eIF-3) complex.

It is found in the cytoplasm. Functionally, component of the eukaryotic translation initiation factor 3 (eIF-3) complex, which is involved in protein synthesis of a specialized repertoire of mRNAs and, together with other initiation factors, stimulates binding of mRNA and methionyl-tRNAi to the 40S ribosome. The eIF-3 complex specifically targets and initiates translation of a subset of mRNAs involved in cell proliferation. The polypeptide is Eukaryotic translation initiation factor 3 subunit H (Caenorhabditis elegans).